Reading from the N-terminus, the 411-residue chain is Acetyl-coenzyme A carboxylase carboxyl transferase subunit beta, chloroplastic (411 aa).

Residues 32–302 (LWTRCDHCGV…KEQGRIPYGE (271 aa)) enclose the CoA carboxyltransferase N-terminal domain. 4 residues coordinate Zn(2+): Cys-36, Cys-39, Cys-55, and Cys-58. A C4-type zinc finger spans residues 36-58 (CDHCGVILYIKHLKENQRVCFGC).

Belongs to the AccD/PCCB family. In terms of assembly, acetyl-CoA carboxylase is a heterohexamer composed of biotin carboxyl carrier protein, biotin carboxylase and 2 subunits each of ACCase subunit alpha and ACCase plastid-coded subunit beta (accD). Zn(2+) serves as cofactor.

The protein localises to the plastid. It is found in the chloroplast stroma. The catalysed reaction is N(6)-carboxybiotinyl-L-lysyl-[protein] + acetyl-CoA = N(6)-biotinyl-L-lysyl-[protein] + malonyl-CoA. Its pathway is lipid metabolism; malonyl-CoA biosynthesis; malonyl-CoA from acetyl-CoA: step 1/1. Component of the acetyl coenzyme A carboxylase (ACC) complex. Biotin carboxylase (BC) catalyzes the carboxylation of biotin on its carrier protein (BCCP) and then the CO(2) group is transferred by the transcarboxylase to acetyl-CoA to form malonyl-CoA. This is Acetyl-coenzyme A carboxylase carboxyl transferase subunit beta, chloroplastic from Chlorella vulgaris (Green alga).